The primary structure comprises 346 residues: Nicotinate-nucleotide--dimethylbenzimidazole phosphoribosyltransferase (346 aa).

Glu-313 acts as the Proton acceptor in catalysis.

Belongs to the CobT family.

The enzyme catalyses 5,6-dimethylbenzimidazole + nicotinate beta-D-ribonucleotide = alpha-ribazole 5'-phosphate + nicotinate + H(+). The protein operates within nucleoside biosynthesis; alpha-ribazole biosynthesis; alpha-ribazole from 5,6-dimethylbenzimidazole: step 1/2. Its function is as follows. Catalyzes the synthesis of alpha-ribazole-5'-phosphate from nicotinate mononucleotide (NAMN) and 5,6-dimethylbenzimidazole (DMB). This chain is Nicotinate-nucleotide--dimethylbenzimidazole phosphoribosyltransferase, found in Parabacteroides distasonis (strain ATCC 8503 / DSM 20701 / CIP 104284 / JCM 5825 / NCTC 11152).